We begin with the raw amino-acid sequence, 130 residues long: Small ribosomal subunit protein uS11 (130 aa).

This sequence belongs to the universal ribosomal protein uS11 family. Part of the 30S ribosomal subunit. Interacts with proteins S7 and S18. Binds to IF-3.

Its function is as follows. Located on the platform of the 30S subunit, it bridges several disparate RNA helices of the 16S rRNA. Forms part of the Shine-Dalgarno cleft in the 70S ribosome. The sequence is that of Small ribosomal subunit protein uS11 from Prochlorococcus marinus (strain MIT 9303).